We begin with the raw amino-acid sequence, 431 residues long: MAPGLLENNTLSGTAAPRTEFKAIVNDLRELQAHVQRVQSAIEAPEVQSWLNEQLHHPDQLPDKELEQLALDLVDSMDKLQLQLVPSVSLLTDGFFGYLNSKTLWTVVEAQVADRLAENGPQPVSTLGLRCGIQPERLAQLLDTLVSNGIFAYNPADDTYSNNRASLLLCHDHWTQWHLWADLYPNEFFDVSRAMPQAVRLGESRTAAQIAYGTDLDLFEYLAKEQKLAKFQKTLGAGAVAQARGLTVDYPWEEIGSEPILDIGGGSGAFLASLLRAHPHLRGSLMDIQSVIELITPEFREPHGRFSDIGSRVQQLVVGDFTKQIPPSAVYTMKWCLHDWVDDDVLTILKNVRRSIVPSSVSRFLVVESIKSPGRSGRLPRYGDLIMMITCNGKERSLEDWKRLGELAGWKLYQVHRVRRAWPCIIDFRPM.

Residues 20-85 (EFKAIVNDLR…SMDKLQLQLV (66 aa)) adopt a coiled-coil conformation. S-adenosyl-L-methionine contacts are provided by residues D287 and 319-321 (GDF). H338 acts as the Proton acceptor in catalysis.

This sequence belongs to the class I-like SAM-binding methyltransferase superfamily. Cation-independent O-methyltransferase family. COMT subfamily.

Its pathway is mycotoxin biosynthesis. In terms of biological role, O-methyltransferase; part of the gene cluster that mediates the biosynthesis of gliotoxin, a member of the epipolythiodioxopiperazine (ETP) class of toxins characterized by a disulfide bridged cyclic dipeptide. The first step in gliotoxin biosynthesis is the condensation of serine and phenylalanine to form the cyclo-L-phenylalanyl-L-serine diketopiperazine (DKP) by the NRPS gliP. GliP is also able to produce the DKP cyclo-L-tryptophanyl-L-serine, suggesting that the substrate specificity of the first adenylation (A) domain in gliP is sufficiently relaxed to accommodate both L-Phe and L-Trp. The cytochrome P450 monooxygenase gliC has been shown to catalyze the subsequent hydroxylation of the alpha-carbon of L-Phe in cyclo-L-phenylalanyl-L-serine whereas the second cytochrome P450 enzyme, gliF, is presumably involved in the modification of the DKP side chain. The glutathione S-transferase (GST) gliG then forms a bis-glutathionylated biosynthetic intermediate which is responsible for the sulfurization of gliotoxin. This bis-glutathionylated intermediate is subsequently processed by the gamma-glutamyl cyclotransferase gliK to remove both gamma-glutamyl moieties. Subsequent processing via gliI yields a biosynthetic intermediate, which is N-methylated via the N-methyltransferase gliN, before the gliotoxin oxidoreductase gliT-mediated disulfide bridge closure. GliN-mediated amide methylation confers stability to ETP, damping the spontaneous formation of tri- and tetrasulfides. Intracellular dithiol gliotoxin oxidized by gliT is subsequently effluxed by gliA. Gliotoxin contributes to pathogenesis during invasive aspergillosis. In macrophages and neutrophils, gliotoxin showed inhibition of various different cell functions including cytokine production, antigen presentation, phagocytosis, and production of reactive oxygen species. The sequence is that of O-methyltransferase gliM from Aspergillus fumigatus (strain ATCC MYA-4609 / CBS 101355 / FGSC A1100 / Af293) (Neosartorya fumigata).